The following is a 376-amino-acid chain: tRNA (guanine(26)-N(2))-dimethyltransferase (376 aa).

The region spanning 4-373 is the Trm1 methyltransferase domain; that stretch reads VAVKEGLARI…APFGVVAEVM (370 aa). The S-adenosyl-L-methionine site is built by Arg-36, Arg-61, Asp-78, Asp-120, and Ala-121.

Belongs to the class I-like SAM-binding methyltransferase superfamily. Trm1 family.

It catalyses the reaction guanosine(26) in tRNA + 2 S-adenosyl-L-methionine = N(2)-dimethylguanosine(26) in tRNA + 2 S-adenosyl-L-homocysteine + 2 H(+). In terms of biological role, dimethylates a single guanine residue at position 26 of a number of tRNAs using S-adenosyl-L-methionine as donor of the methyl groups. This Thermococcus kodakarensis (strain ATCC BAA-918 / JCM 12380 / KOD1) (Pyrococcus kodakaraensis (strain KOD1)) protein is tRNA (guanine(26)-N(2))-dimethyltransferase.